The sequence spans 394 residues: MANEKFIRNKTHLNVGTIGHVDHGKTTLTAAITQVLSARGLAKSRAYDQIDNAPEERERGITIKTSHVEYETEKRHYAHVDCPGHADYVKNMITGAAQMDAAILVVSGADSVMPQTREHILLARQVGVPKIVVFLNKCDLSPDEQILELVEMEVRELLSQYDFPGDDIPVIRGSALKALEGDAHYVAQVNKLIETLDTYIEDPVREVDKPFLMPVEDVFTITGRGTVVTGRVERGQVKAGDEVEIVGLKETRKTIVTAVEMFKKDLEFAQAGDNVGALLRGINREDVQRGQVLAKPGSVKPHSKFIAQVYVLTKEEGGRHTAFFSQYRPQFYFRTTDITGVVELQGDVKMVMPGDNAELVVTLNNPIAIEEGTKFSIREGGKTVGAGSVSKLLN.

In terms of domain architecture, tr-type G spans 10 to 204 (KTHLNVGTIG…TLDTYIEDPV (195 aa)). The G1 stretch occupies residues 19-26 (GHVDHGKT). 19–26 (GHVDHGKT) contributes to the GTP binding site. Mg(2+) is bound at residue Thr26. The interval 60 to 64 (GITIK) is G2. The segment at 81-84 (DCPG) is G3. GTP-binding positions include 81-85 (DCPGH) and 136-139 (NKCD). A G4 region spans residues 136–139 (NKCD). The G5 stretch occupies residues 174–176 (SAL).

Belongs to the TRAFAC class translation factor GTPase superfamily. Classic translation factor GTPase family. EF-Tu/EF-1A subfamily. As to quaternary structure, monomer.

The protein resides in the cytoplasm. It carries out the reaction GTP + H2O = GDP + phosphate + H(+). Its function is as follows. GTP hydrolase that promotes the GTP-dependent binding of aminoacyl-tRNA to the A-site of ribosomes during protein biosynthesis. The sequence is that of Elongation factor Tu from Aster yellows witches'-broom phytoplasma (strain AYWB).